The chain runs to 113 residues: Putative pterin-4-alpha-carbinolamine dehydratase (113 aa).

Belongs to the pterin-4-alpha-carbinolamine dehydratase family.

The catalysed reaction is (4aS,6R)-4a-hydroxy-L-erythro-5,6,7,8-tetrahydrobiopterin = (6R)-L-erythro-6,7-dihydrobiopterin + H2O. In Rickettsia bellii (strain OSU 85-389), this protein is Putative pterin-4-alpha-carbinolamine dehydratase.